The primary structure comprises 165 residues: SsrA-binding protein (165 aa).

Positions 141–165 are disordered; sequence EDRRHAIAERETKREMDREISRRRR.

Belongs to the SmpB family.

It localises to the cytoplasm. In terms of biological role, required for rescue of stalled ribosomes mediated by trans-translation. Binds to transfer-messenger RNA (tmRNA), required for stable association of tmRNA with ribosomes. tmRNA and SmpB together mimic tRNA shape, replacing the anticodon stem-loop with SmpB. tmRNA is encoded by the ssrA gene; the 2 termini fold to resemble tRNA(Ala) and it encodes a 'tag peptide', a short internal open reading frame. During trans-translation Ala-aminoacylated tmRNA acts like a tRNA, entering the A-site of stalled ribosomes, displacing the stalled mRNA. The ribosome then switches to translate the ORF on the tmRNA; the nascent peptide is terminated with the 'tag peptide' encoded by the tmRNA and targeted for degradation. The ribosome is freed to recommence translation, which seems to be the essential function of trans-translation. The chain is SsrA-binding protein from Anaeromyxobacter sp. (strain Fw109-5).